The sequence spans 555 residues: Phosphoglucomutase (555 aa).

Alpha-D-glucose 1,6-bisphosphate-binding residues include arginine 22 and serine 114. The Phosphoserine intermediate role is filled by serine 114. Serine 114, aspartate 279, aspartate 281, and aspartate 283 together coordinate Mg(2+). Serine 114 bears the Phosphoserine mark. 6 residues coordinate alpha-D-glucose 1,6-bisphosphate: aspartate 283, arginine 284, threonine 347, glutamate 366, serine 368, and lysine 379.

It belongs to the phosphohexose mutase family. In terms of assembly, monomer. Mg(2+) serves as cofactor.

The protein resides in the cytoplasm. The enzyme catalyses alpha-D-glucose 1-phosphate = alpha-D-glucose 6-phosphate. The catalysed reaction is O-phospho-L-seryl-[protein] + alpha-D-glucose 1-phosphate = alpha-D-glucose 1,6-bisphosphate + L-seryl-[protein]. It carries out the reaction alpha-D-glucose 1,6-bisphosphate + L-seryl-[protein] = O-phospho-L-seryl-[protein] + alpha-D-glucose 6-phosphate. Functionally, catalyzes the reversible isomerization of alpha-D-glucose 1-phosphate to alpha-D-glucose 6-phosphate. The mechanism proceeds via the intermediate compound alpha-D-glucose 1,6-bisphosphate. Key enzyme in hexose metabolism. The reverse reaction is an essential step for biosynthesis because glucose 1-phosphate is the starting point for the synthesis of UDP-glucose, which acts as a precursor for the synthesis of oligosaccharides and trehalose. This is Phosphoglucomutase (pgmA) from Aspergillus fumigatus (strain ATCC MYA-4609 / CBS 101355 / FGSC A1100 / Af293) (Neosartorya fumigata).